Reading from the N-terminus, the 717-residue chain is Ribosomal RNA large subunit methyltransferase K/L (717 aa).

The 98-residue stretch at 45 to 142 (GAYRICLGSR…DKRSGVQTVQ (98 aa)) folds into the THUMP domain.

This sequence belongs to the methyltransferase superfamily. RlmKL family.

The protein localises to the cytoplasm. The enzyme catalyses guanosine(2445) in 23S rRNA + S-adenosyl-L-methionine = N(2)-methylguanosine(2445) in 23S rRNA + S-adenosyl-L-homocysteine + H(+). It carries out the reaction guanosine(2069) in 23S rRNA + S-adenosyl-L-methionine = N(2)-methylguanosine(2069) in 23S rRNA + S-adenosyl-L-homocysteine + H(+). Functionally, specifically methylates the guanine in position 2445 (m2G2445) and the guanine in position 2069 (m7G2069) of 23S rRNA. The polypeptide is Ribosomal RNA large subunit methyltransferase K/L (Hahella chejuensis (strain KCTC 2396)).